We begin with the raw amino-acid sequence, 987 residues long: MANFAKPENALKRADELINVGQKQDALQALHDLITSKRYRAWQKPLEKIMFKYLDLCVDLKRGRFAKDGLIQYRIVCQQVNVSSLEEVIKHFLHLATDKAEQARSQADALEEALDVDDLEADRKPEDLQLSIVSGEKGKDRSDRELVTPWFKFLWETYRTVLEILRNNSKLEALYAMTAHKAFQFCKQYKRTTEFRRLCEIIRNHLANLNKYRDQRDRPDLSAPESLQLYLDTRFDQLKVATELGLWQEAFRSVEDIYGLMCMVKKTPKSSLLMVYYSKLTEIFWISSSHLYHAYAWFKLFSLQKNFNKNLSQKDLQLIASSVVLAALSIPPFDRAQSASHMELENEKERNLRMANLIGFNLEPKFEGKDMLSRSALLSELVSKGVLSCASQEVKDLFHVLEHEFHPLDLGSKIQPLLEKISKSGGKLSSAPSLPEVQLSQYVPSLEKLATLRLLQQVSKIYQTIRIESLSQLVPFFQFSEVEKISVDAVKNNFVAMKVDHMKGVVIFGNLGIESDGLRDHLAVFAESLSKVRAMLYPVPSKASKLAGVIPNLADTVEKEHKRLLARKSIIEKRKEDQERQQLEMEREEEQKRLKLQKLTEEAEQKRLAAELAERRKQRILREIEEKELEEAQALLEETEKRMKKGKKKPLLDGEKVTKQSVKERALTEQLKERQEMEKKLQKLAKTMDYLERAKREEAAPLIEAAYQRRLVEEREFYEREQQREVELSKERHESDLKEKNRLSRMLGNKEIFQAQVISRRQAEFDRIRTEREERISKIIREKKQERDIKRKQIYYLKIEEERIRKLQEEEEARKQEEAERLKKVEAERKANLDKAFEKQRQREIELEEKSRREREELLRGTNAPPARLAEPTVTPVGTTAPAAAAAAAGAPAAPYVPKWKRQTTEVSGPSAPTSSETDRRSNRGPPPGDDHWGSNRGAAQNTDRWTSNRERSGPPAEGGDRWGSGPRGSDDRRSTFGSSRPRPTQR.

The stretch at 93 to 122 forms a coiled coil; it reads LHLATDKAEQARSQADALEEALDVDDLEAD. In terms of domain architecture, PCI spans 316 to 513; it reads LQLIASSVVL…GVVIFGNLGI (198 aa). 2 coiled-coil regions span residues 556–742 and 797–858; these read TVEK…EKNR and LKIE…REEL. Basic and acidic residues predominate over residues 808–859; the sequence is QEEEEARKQEEAERLKKVEAERKANLDKAFEKQRQREIELEEKSRREREELL. A disordered region spans residues 808 to 987; it reads QEEEEARKQE…GSSRPRPTQR (180 aa). The span at 872-894 shows a compositional bias: low complexity; sequence PTVTPVGTTAPAAAAAAAGAPAA. 2 stretches are compositionally biased toward polar residues: residues 905–916 and 976–987; these read TEVSGPSAPTSS and TFGSSRPRPTQR.

It belongs to the eIF-3 subunit A family. Component of the eukaryotic translation initiation factor 3 (eIF-3) complex. Binds to the translation initiation factor TIF3H1.

It localises to the cytoplasm. Its function is as follows. RNA-binding component of the eukaryotic translation initiation factor 3 (eIF-3) complex, which is involved in protein synthesis of a specialized repertoire of mRNAs and, together with other initiation factors, stimulates binding of mRNA and methionyl-tRNAi to the 40S ribosome. The eIF-3 complex specifically targets and initiates translation of a subset of mRNAs involved in cell proliferation. This chain is Eukaryotic translation initiation factor 3 subunit A (TIF3A1), found in Arabidopsis thaliana (Mouse-ear cress).